Consider the following 444-residue polypeptide: Tol-Pal system protein TolB (444 aa).

Positions 1–19 (MRNIIYFILSLLFSFASYA) are cleaved as a signal peptide.

This sequence belongs to the TolB family. As to quaternary structure, the Tol-Pal system is composed of five core proteins: the inner membrane proteins TolA, TolQ and TolR, the periplasmic protein TolB and the outer membrane protein Pal. They form a network linking the inner and outer membranes and the peptidoglycan layer.

It is found in the periplasm. Its function is as follows. Part of the Tol-Pal system, which plays a role in outer membrane invagination during cell division and is important for maintaining outer membrane integrity. This chain is Tol-Pal system protein TolB, found in Rickettsia massiliae (strain Mtu5).